The primary structure comprises 227 residues: Probable N-acetyltransferase family 8 member 5 (227 aa).

Helical transmembrane passes span 29 to 49 (IPAAFRYTLLLPQTLLFLFVM), 53 to 73 (IVLVFGSWLLAVICIFFLLLL), and 201 to 221 (ISIIKWLITFSIIHFTYSFPS). The N-acetyltransferase domain occupies 69 to 213 (FLLLLLRLLA…IKWLITFSII (145 aa)).

It belongs to the camello family.

Its subcellular location is the membrane. Its function is as follows. May play a role in regulation of gastrulation. This Mus musculus (Mouse) protein is Probable N-acetyltransferase family 8 member 5.